A 287-amino-acid polypeptide reads, in one-letter code: ATP synthase gamma chain (287 aa).

This sequence belongs to the ATPase gamma chain family. F-type ATPases have 2 components, CF(1) - the catalytic core - and CF(0) - the membrane proton channel. CF(1) has five subunits: alpha(3), beta(3), gamma(1), delta(1), epsilon(1). CF(0) has three main subunits: a, b and c.

It localises to the cell inner membrane. Functionally, produces ATP from ADP in the presence of a proton gradient across the membrane. The gamma chain is believed to be important in regulating ATPase activity and the flow of protons through the CF(0) complex. This chain is ATP synthase gamma chain, found in Escherichia fergusonii (strain ATCC 35469 / DSM 13698 / CCUG 18766 / IAM 14443 / JCM 21226 / LMG 7866 / NBRC 102419 / NCTC 12128 / CDC 0568-73).